The primary structure comprises 616 residues: Proline--tRNA ligase (616 aa).

This sequence belongs to the class-II aminoacyl-tRNA synthetase family. ProS type 1 subfamily. As to quaternary structure, homodimer.

The protein localises to the cytoplasm. It carries out the reaction tRNA(Pro) + L-proline + ATP = L-prolyl-tRNA(Pro) + AMP + diphosphate. Functionally, catalyzes the attachment of proline to tRNA(Pro) in a two-step reaction: proline is first activated by ATP to form Pro-AMP and then transferred to the acceptor end of tRNA(Pro). As ProRS can inadvertently accommodate and process non-cognate amino acids such as alanine and cysteine, to avoid such errors it has two additional distinct editing activities against alanine. One activity is designated as 'pretransfer' editing and involves the tRNA(Pro)-independent hydrolysis of activated Ala-AMP. The other activity is designated 'posttransfer' editing and involves deacylation of mischarged Ala-tRNA(Pro). The misacylated Cys-tRNA(Pro) is not edited by ProRS. This chain is Proline--tRNA ligase, found in Lactococcus lactis subsp. cremoris (strain MG1363).